The following is a 437-amino-acid chain: Regulator of phospholipase D SRF1 (437 aa).

A disordered region spans residues 1-24; sequence MGDSNSSQEAYSDTTSTNASRIAD. The Cytoplasmic portion of the chain corresponds to 1 to 267; it reads MGDSNSSQEA…LTSLLLDNQY (267 aa). A phosphoserine mark is found at Ser45 and Ser167. Residues 268–288 form a helical membrane-spanning segment; the sequence is LILGLRIFTGILSCISLALAI. At 289-308 the chain is on the extracellular side; the sequence is KIFQNSRSNNTISESKIGQQ. Asn297 is a glycosylation site (N-linked (GlcNAc...) asparagine). A helical transmembrane segment spans residues 309–329; sequence PSTIMAICVNAVAIAYIIYIA. The Cytoplasmic portion of the chain corresponds to 330 to 348; the sequence is HDEFAGKPVGLRNPLSKLK. A helical transmembrane segment spans residues 349–369; sequence LILLDLLFIIFSSANLALAFN. The Extracellular portion of the chain corresponds to 370 to 403; it reads TRFDKEWVCTSIRRSNGSTYGYPKIPRICRKQEA. Asn385 is a glycosylation site (N-linked (GlcNAc...) asparagine). Residues 404–424 traverse the membrane as a helical segment; that stretch reads LSAFLFVALFMWVITFSISIV. The Cytoplasmic portion of the chain corresponds to 425–437; that stretch reads RVVEKVSSITNRN.

As to quaternary structure, interacts with SPO14.

It localises to the membrane. Its function is as follows. Regulator of phospholipase D (SPO14) which is required for SPO14 catalytic activity in mitotic cells. Essential to buffer the toxic effects of C16:0 platelet activating factor. This Saccharomyces cerevisiae (strain ATCC 204508 / S288c) (Baker's yeast) protein is Regulator of phospholipase D SRF1 (SRF1).